A 395-amino-acid polypeptide reads, in one-letter code: Carbamoyl phosphate synthase small chain (395 aa).

The interval 1 to 192 is CPSase; that stretch reads MTYNLHPAIL…LQYKTDKMYG (192 aa). L-glutamine contacts are provided by S50, G244, and G246. One can recognise a Glutamine amidotransferase type-1 domain in the interval 196–383; sequence KIILIDFGVK…INLIKHFKQY (188 aa). C273 (nucleophile) is an active-site residue. L-glutamine contacts are provided by M274, Q277, N313, G315, and F316. Active-site residues include H356 and E358.

It belongs to the CarA family. Composed of two chains; the small (or glutamine) chain promotes the hydrolysis of glutamine to ammonia, which is used by the large (or ammonia) chain to synthesize carbamoyl phosphate. Tetramer of heterodimers (alpha,beta)4.

It is found in the plastid. The protein localises to the chloroplast. The catalysed reaction is hydrogencarbonate + L-glutamine + 2 ATP + H2O = carbamoyl phosphate + L-glutamate + 2 ADP + phosphate + 2 H(+). It catalyses the reaction L-glutamine + H2O = L-glutamate + NH4(+). It participates in amino-acid biosynthesis; L-arginine biosynthesis; carbamoyl phosphate from bicarbonate: step 1/1. The protein operates within pyrimidine metabolism; UMP biosynthesis via de novo pathway; (S)-dihydroorotate from bicarbonate: step 1/3. Its function is as follows. Small subunit of the glutamine-dependent carbamoyl phosphate synthetase (CPSase). CPSase catalyzes the formation of carbamoyl phosphate from the ammonia moiety of glutamine, carbonate, and phosphate donated by ATP, constituting the first step of 2 biosynthetic pathways, one leading to arginine and/or urea and the other to pyrimidine nucleotides. The small subunit (glutamine amidotransferase) binds and cleaves glutamine to supply the large subunit with the substrate ammonia. This chain is Carbamoyl phosphate synthase small chain, found in Gracilaria tenuistipitata var. liui (Red alga).